The primary structure comprises 104 residues: Small ribosomal subunit protein uS10 (104 aa).

It belongs to the universal ribosomal protein uS10 family. As to quaternary structure, part of the 30S ribosomal subunit.

Functionally, involved in the binding of tRNA to the ribosomes. The sequence is that of Small ribosomal subunit protein uS10 from Xanthomonas oryzae pv. oryzae (strain MAFF 311018).